Consider the following 546-residue polypeptide: SusD-like protein BACOVA_02651 (546 aa).

The signal sequence occupies residues 1–21 (MRIFMKSKLLVIATTALLFAA). Cys-22 carries the N-palmitoyl cysteine lipid modification. A lipid anchor (S-diacylglycerol cysteine) is attached at Cys-22.

Belongs to the SusD family.

The protein localises to the cell outer membrane. It functions in the pathway glucan metabolism; xyloglucan degradation. Functionally, polysaccharide-binding protein present at the surface of the cell. Probably mediates xyloglucan-binding before xyloglucan transport in the periplasm for degradation. This chain is SusD-like protein BACOVA_02651, found in Bacteroides ovatus (strain ATCC 8483 / DSM 1896 / JCM 5824 / BCRC 10623 / CCUG 4943 / NCTC 11153).